The chain runs to 170 residues: Ribosome maturation factor RimM (170 aa).

Residues 97–170 (HPDEYYWVDL…RIVVDWDPEF (74 aa)) enclose the PRC barrel domain.

It belongs to the RimM family. As to quaternary structure, binds ribosomal protein uS19.

It localises to the cytoplasm. In terms of biological role, an accessory protein needed during the final step in the assembly of 30S ribosomal subunit, possibly for assembly of the head region. Essential for efficient processing of 16S rRNA. May be needed both before and after RbfA during the maturation of 16S rRNA. It has affinity for free ribosomal 30S subunits but not for 70S ribosomes. In Xylella fastidiosa (strain M23), this protein is Ribosome maturation factor RimM.